The following is a 190-amino-acid chain: Nuclear transcription factor Y subunit A-7 (190 aa).

Residues 1 to 33 (MTSSIHELSDNIGSHEKQEQRDSHFQPPIPSAR) form a disordered region. The segment covering 7–24 (ELSDNIGSHEKQEQRDSH) has biased composition (basic and acidic residues). Positions 103–126 (FVNAKQYHGILRRRQSRARLESQN) match the Subunit association domain (SAD) motif. The segment at residues 133–158 (KPYLHESRHLHAIRRPRGCGGRFLNA) is a DNA-binding region (NFYA/HAP2-type). The disordered stretch occupies residues 147–190 (RPRGCGGRFLNAKKEDEHHEDSSHEEKSNLSAGKSAMAASSGTS). Basic and acidic residues predominate over residues 158 to 174 (AKKEDEHHEDSSHEEKS). Residues 177 to 190 (SAGKSAMAASSGTS) are compositionally biased toward low complexity.

This sequence belongs to the NFYA/HAP2 subunit family. As to quaternary structure, heterotrimeric transcription factor composed of three components, NF-YA, NF-YB and NF-YC. NF-YB and NF-YC must interact and dimerize for NF-YA association and DNA binding.

It is found in the nucleus. In terms of biological role, stimulates the transcription of various genes by recognizing and binding to a CCAAT motif in promoters. This chain is Nuclear transcription factor Y subunit A-7 (NFYA7), found in Arabidopsis thaliana (Mouse-ear cress).